The following is a 179-amino-acid chain: MSRIGKMPIALAKEAKLEISEGNLRVSGPKGVLEQALVEEVKVLQEEGLVKVERINDSKRSRAMHGLYRMLLSNMIEGVTKGFTRKLEIAGVGFRAEMKGDLLALTLGFSHMIYFKAPEGVKLETPDPVTVLVSGIDKALIGQVAAKIRSFRKPEPYRGKGIKYEGEVIRRKEGKAAGK.

The protein belongs to the universal ribosomal protein uL6 family. Part of the 50S ribosomal subunit.

This protein binds to the 23S rRNA, and is important in its secondary structure. It is located near the subunit interface in the base of the L7/L12 stalk, and near the tRNA binding site of the peptidyltransferase center. This chain is Large ribosomal subunit protein uL6, found in Chlorobium phaeovibrioides (strain DSM 265 / 1930) (Prosthecochloris vibrioformis (strain DSM 265)).